Reading from the N-terminus, the 134-residue chain is ATP synthase epsilon chain (134 aa).

Belongs to the ATPase epsilon chain family. In terms of assembly, F-type ATPases have 2 components, CF(1) - the catalytic core - and CF(0) - the membrane proton channel. CF(1) has five subunits: alpha(3), beta(3), gamma(1), delta(1), epsilon(1). CF(0) has three main subunits: a, b and c.

The protein resides in the cellular thylakoid membrane. In terms of biological role, produces ATP from ADP in the presence of a proton gradient across the membrane. This Prochlorococcus marinus (strain AS9601) protein is ATP synthase epsilon chain.